A 72-amino-acid chain; its full sequence is Small ribosomal subunit protein bS18 (72 aa).

Belongs to the bacterial ribosomal protein bS18 family. Part of the 30S ribosomal subunit. Forms a tight heterodimer with protein bS6.

Its function is as follows. Binds as a heterodimer with protein bS6 to the central domain of the 16S rRNA, where it helps stabilize the platform of the 30S subunit. In Francisella tularensis subsp. holarctica (strain FTNF002-00 / FTA), this protein is Small ribosomal subunit protein bS18.